We begin with the raw amino-acid sequence, 347 residues long: 4-hydroxythreonine-4-phosphate dehydrogenase (347 aa).

His-137 and Thr-138 together coordinate substrate. Residues His-174, His-219, and His-274 each contribute to the a divalent metal cation site. Substrate contacts are provided by Lys-282, Asn-291, and Arg-300.

The protein belongs to the PdxA family. As to quaternary structure, homodimer. Zn(2+) serves as cofactor. The cofactor is Mg(2+). Co(2+) is required as a cofactor.

It is found in the cytoplasm. It carries out the reaction 4-(phosphooxy)-L-threonine + NAD(+) = 3-amino-2-oxopropyl phosphate + CO2 + NADH. It functions in the pathway cofactor biosynthesis; pyridoxine 5'-phosphate biosynthesis; pyridoxine 5'-phosphate from D-erythrose 4-phosphate: step 4/5. In terms of biological role, catalyzes the NAD(P)-dependent oxidation of 4-(phosphooxy)-L-threonine (HTP) into 2-amino-3-oxo-4-(phosphooxy)butyric acid which spontaneously decarboxylates to form 3-amino-2-oxopropyl phosphate (AHAP). The sequence is that of 4-hydroxythreonine-4-phosphate dehydrogenase from Cupriavidus pinatubonensis (strain JMP 134 / LMG 1197) (Cupriavidus necator (strain JMP 134)).